We begin with the raw amino-acid sequence, 590 residues long: Arginine--tRNA ligase (590 aa).

The short motif at 134–144 (ANPTGPMHVGH) is the 'HIGH' region element.

Belongs to the class-I aminoacyl-tRNA synthetase family. Monomer.

Its subcellular location is the cytoplasm. It carries out the reaction tRNA(Arg) + L-arginine + ATP = L-arginyl-tRNA(Arg) + AMP + diphosphate. This is Arginine--tRNA ligase from Beijerinckia indica subsp. indica (strain ATCC 9039 / DSM 1715 / NCIMB 8712).